A 369-amino-acid polypeptide reads, in one-letter code: Ribosomal RNA large subunit methyltransferase G (369 aa).

This sequence belongs to the methyltransferase superfamily. RlmG family.

The protein resides in the cytoplasm. It carries out the reaction guanosine(1835) in 23S rRNA + S-adenosyl-L-methionine = N(2)-methylguanosine(1835) in 23S rRNA + S-adenosyl-L-homocysteine + H(+). Functionally, specifically methylates the guanine in position 1835 (m2G1835) of 23S rRNA. This Magnetococcus marinus (strain ATCC BAA-1437 / JCM 17883 / MC-1) protein is Ribosomal RNA large subunit methyltransferase G.